The chain runs to 296 residues: Glycine--tRNA ligase alpha subunit (296 aa).

Belongs to the class-II aminoacyl-tRNA synthetase family. Tetramer of two alpha and two beta subunits.

The protein localises to the cytoplasm. The enzyme catalyses tRNA(Gly) + glycine + ATP = glycyl-tRNA(Gly) + AMP + diphosphate. This Parasynechococcus marenigrum (strain WH8102) protein is Glycine--tRNA ligase alpha subunit.